The primary structure comprises 351 residues: Glucose 1-dehydrogenase 1 (351 aa).

Zn(2+) is bound at residue C39. T41 contacts substrate. The Zn(2+) site is built by H64 and E65. Substrate contacts are provided by E113 and E149. A Zn(2+)-binding site is contributed by E149. NADP(+) is bound by residues 182-185, 265-267, and 292-294; these read AGPI, LGI, and ATN. N294 contacts substrate.

It belongs to the zinc-containing alcohol dehydrogenase family. Glucose 1-dehydrogenase subfamily. Zn(2+) serves as cofactor.

The enzyme catalyses D-glucose + NAD(+) = D-glucono-1,5-lactone + NADH + H(+). It catalyses the reaction D-glucose + NADP(+) = D-glucono-1,5-lactone + NADPH + H(+). Its function is as follows. Catalyzes the NAD(P)(+)-dependent oxidation of D-glucose to D-gluconate via gluconolactone. Can utilize both NAD(+) and NADP(+) as electron acceptor. Is involved in the degradation of glucose through a non-phosphorylative variant of the Entner-Doudoroff pathway. The polypeptide is Glucose 1-dehydrogenase 1 (Vulcanisaeta moutnovskia (strain 768-28)).